We begin with the raw amino-acid sequence, 232 residues long: 7-cyano-7-deazaguanine synthase 2 (232 aa).

An ATP-binding site is contributed by 9–19; sequence FSGGQDSTTCL. The Zn(2+) site is built by Cys189, Cys198, Cys201, and Cys204.

The protein belongs to the QueC family. It depends on Zn(2+) as a cofactor.

The catalysed reaction is 7-carboxy-7-deazaguanine + NH4(+) + ATP = 7-cyano-7-deazaguanine + ADP + phosphate + H2O + H(+). It participates in purine metabolism; 7-cyano-7-deazaguanine biosynthesis. Functionally, catalyzes the ATP-dependent conversion of 7-carboxy-7-deazaguanine (CDG) to 7-cyano-7-deazaguanine (preQ(0)). This chain is 7-cyano-7-deazaguanine synthase 2, found in Pseudomonas fluorescens (strain ATCC BAA-477 / NRRL B-23932 / Pf-5).